The sequence spans 587 residues: Aspartate--tRNA ligase (587 aa).

Residue glutamate 174 participates in L-aspartate binding. Residues 198-201 (QTFK) are aspartate. Arginine 220 is a binding site for L-aspartate. Residues 220–222 (RDE) and glutamine 229 contribute to the ATP site. Histidine 447 contributes to the L-aspartate binding site. Glutamate 481 contributes to the ATP binding site. Arginine 488 is a binding site for L-aspartate. 533-536 (GLDR) serves as a coordination point for ATP.

The protein belongs to the class-II aminoacyl-tRNA synthetase family. Type 1 subfamily. As to quaternary structure, homodimer.

Its subcellular location is the cytoplasm. It carries out the reaction tRNA(Asp) + L-aspartate + ATP = L-aspartyl-tRNA(Asp) + AMP + diphosphate. Functionally, catalyzes the attachment of L-aspartate to tRNA(Asp) in a two-step reaction: L-aspartate is first activated by ATP to form Asp-AMP and then transferred to the acceptor end of tRNA(Asp). This is Aspartate--tRNA ligase from Porphyromonas gingivalis (strain ATCC BAA-308 / W83).